Reading from the N-terminus, the 157-residue chain is MAVKIKLQRLGKIRTPHYRVVVADARTRRDGKVIENIGIYEPKQDPSVIKIDSERAQYWLGVGAQPTEPVLALLKVTGDWQKFKGLEGAEGTLKVAEPKPSKLELFNQALAEANEGPTAEAITEKKKKAKEEAAAKAAAEAEAAAKAEEAPAEEAAE.

The interval Asn114–Glu157 is disordered.

The protein belongs to the bacterial ribosomal protein bS16 family.

This is Small ribosomal subunit protein bS16 from Corynebacterium diphtheriae (strain ATCC 700971 / NCTC 13129 / Biotype gravis).